Reading from the N-terminus, the 267-residue chain is Undecaprenyl-diphosphatase (267 aa).

The next 8 helical transmembrane spans lie at 1–21 (MTYF…FLPI), 39–59 (QGLA…VMYF), 87–107 (WLII…KDFI), 111–131 (LRSA…LWWV), 149–169 (ALFL…RSGI), 189–209 (FLMS…KLAL), 218–238 (FLGT…HFFL), and 246–266 (MTPF…WLAL).

Belongs to the UppP family.

The protein localises to the cell inner membrane. The catalysed reaction is di-trans,octa-cis-undecaprenyl diphosphate + H2O = di-trans,octa-cis-undecaprenyl phosphate + phosphate + H(+). Functionally, catalyzes the dephosphorylation of undecaprenyl diphosphate (UPP). Confers resistance to bacitracin. This Aliivibrio salmonicida (strain LFI1238) (Vibrio salmonicida (strain LFI1238)) protein is Undecaprenyl-diphosphatase.